We begin with the raw amino-acid sequence, 361 residues long: Cobalt-precorrin-5B C(1)-methyltransferase (361 aa).

The protein belongs to the CbiD family.

The catalysed reaction is Co-precorrin-5B + S-adenosyl-L-methionine = Co-precorrin-6A + S-adenosyl-L-homocysteine. It participates in cofactor biosynthesis; adenosylcobalamin biosynthesis; cob(II)yrinate a,c-diamide from sirohydrochlorin (anaerobic route): step 6/10. Catalyzes the methylation of C-1 in cobalt-precorrin-5B to form cobalt-precorrin-6A. The sequence is that of Cobalt-precorrin-5B C(1)-methyltransferase from Methanobrevibacter smithii (strain ATCC 35061 / DSM 861 / OCM 144 / PS).